The primary structure comprises 163 residues: Nucleotide-binding protein Dvul_1191 (163 aa).

This sequence belongs to the YajQ family.

In terms of biological role, nucleotide-binding protein. This is Nucleotide-binding protein Dvul_1191 from Nitratidesulfovibrio vulgaris (strain DP4) (Desulfovibrio vulgaris).